Here is a 152-residue protein sequence, read N- to C-terminus: Large ribosomal subunit protein uL22 (152 aa).

Low complexity predominate over residues 124-143 (APTKAASKKAAPAKQTTPAA). Residues 124 to 152 (APTKAASKKAAPAKQTTPAATESKTEGAE) are disordered.

It belongs to the universal ribosomal protein uL22 family. In terms of assembly, part of the 50S ribosomal subunit.

In terms of biological role, this protein binds specifically to 23S rRNA; its binding is stimulated by other ribosomal proteins, e.g. L4, L17, and L20. It is important during the early stages of 50S assembly. It makes multiple contacts with different domains of the 23S rRNA in the assembled 50S subunit and ribosome. The globular domain of the protein is located near the polypeptide exit tunnel on the outside of the subunit, while an extended beta-hairpin is found that lines the wall of the exit tunnel in the center of the 70S ribosome. This is Large ribosomal subunit protein uL22 from Salinispora arenicola (strain CNS-205).